Here is a 420-residue protein sequence, read N- to C-terminus: Structure-specific endonuclease subunit SLX1 homolog (420 aa).

The GIY-YIG domain maps to 19–106 (SSDNTYPWQN…QHPLKSRRLR (88 aa)). 2 disordered regions span residues 237-306 (SVEE…AAVN) and 311-330 (DDSA…DDVA). The span at 247 to 266 (PSSCSVPPSTGSSAAPTPGA) shows a compositional bias: low complexity. Positions 279–301 (VDPRLDSDDRDDNHQFESPDNHE) are enriched in basic and acidic residues. Residues 311–327 (DDSADDGTTDGNEDGPD) show a composition bias toward acidic residues. An SLX1-type zinc finger spans residues 348 to 405 (CGHCHQSVYQELCIVCLNATCTYRAHLLCAAQAAVHPLGQSSPSETRLVPLRHSCPRC).

This sequence belongs to the SLX1 family. In terms of assembly, forms a heterodimer with a member of the SLX4 family. The cofactor is a divalent metal cation.

It localises to the nucleus. Its function is as follows. Catalytic subunit of a heterodimeric structure-specific endonuclease that resolves DNA secondary structures generated during DNA repair and recombination. Has endonuclease activity towards branched DNA substrates, introducing single-strand cuts in duplex DNA close to junctions with ss-DNA. The polypeptide is Structure-specific endonuclease subunit SLX1 homolog (Monosiga brevicollis (Choanoflagellate)).